The chain runs to 178 residues: NADH-quinone oxidoreductase subunit B (178 aa).

[4Fe-4S] cluster-binding residues include Cys-45, Cys-46, Cys-111, and Cys-140.

The protein belongs to the complex I 20 kDa subunit family. In terms of assembly, NDH-1 is composed of 15 different subunits. Subunits NuoB, C, D, E, F, and G constitute the peripheral sector of the complex. The cofactor is [4Fe-4S] cluster.

The protein localises to the cell membrane. The enzyme catalyses a quinone + NADH + 5 H(+)(in) = a quinol + NAD(+) + 4 H(+)(out). In terms of biological role, NDH-1 shuttles electrons from NADH, via FMN and iron-sulfur (Fe-S) centers, to quinones in the respiratory chain. The immediate electron acceptor for the enzyme in this species is believed to be a menaquinone. Couples the redox reaction to proton translocation (for every two electrons transferred, four hydrogen ions are translocated across the cytoplasmic membrane), and thus conserves the redox energy in a proton gradient. The protein is NADH-quinone oxidoreductase subunit B of Deinococcus deserti (strain DSM 17065 / CIP 109153 / LMG 22923 / VCD115).